The primary structure comprises 383 residues: Paralemmin-1 (383 aa).

The residue at position 1 (Met1) is an N-acetylmethionine. Residues 7-101 (DTVSQQERLQ…EKEIDVLEFG (95 aa)) are a coiled coil. Disordered stretches follow at residues 51–164 (RERW…STMM), 242–293 (TLSE…QPGQ), and 333–374 (SVTP…DMKK). The span at 69 to 96 (DMRKQMQEDEQKARSLEESITRLEKEID) shows a compositional bias: basic and acidic residues. Ser116, Ser122, and Ser124 each carry phosphoserine. The span at 133–143 (ETMVNAQQTPL) shows a compositional bias: polar residues. 3 positions are modified to phosphothreonine: Thr141, Thr145, and Thr153. 2 positions are modified to phosphoserine: Ser157 and Ser161. At Thr242 the chain carries Phosphothreonine. Ser244 carries the post-translational modification Phosphoserine. Positions 257–273 (GLAEDVTRTTPSRREIT) are enriched in basic and acidic residues. The residue at position 345 (Ser345) is a Phosphoserine. Positions 357 to 367 (QTGPTTTPSDT) are enriched in polar residues. Phosphothreonine is present on residues Thr361, Thr362, and Thr363. Phosphoserine is present on Ser365. A Phosphothreonine modification is found at Thr367. Residues Cys377 and Cys379 are each lipidated (S-palmitoyl cysteine). At Cys380 the chain carries Cysteine methyl ester. Cys380 carries S-farnesyl cysteine lipidation. A propeptide spans 381 to 383 (SVM) (removed in mature form).

Belongs to the paralemmin family. As to quaternary structure, interacts with dopamine receptor DRD3. Expressed in neurons cells of neuropil-rich areas of the brain, in the Purkinje cells of the cerebellum, in cells of the cerebral cortex, hippocampus, brainstem nuclei and glial processes and sheaths. Expressed in the medulla of the adrenal chromaffin cells and renal duct cells (at protein level).

The protein resides in the cell membrane. Its subcellular location is the cell projection. It is found in the filopodium membrane. It localises to the axon. The protein localises to the dendrite. The protein resides in the dendritic spine. Its subcellular location is the basolateral cell membrane. It is found in the apicolateral cell membrane. Its function is as follows. Involved in plasma membrane dynamics and cell process formation. Necessary for axonal and dendritic filopodia induction, for dendritic spine maturation and synapse formation in a palmitoylation-dependent manner. This is Paralemmin-1 (Palm) from Rattus norvegicus (Rat).